A 164-amino-acid polypeptide reads, in one-letter code: SsrA-binding protein (164 aa).

It belongs to the SmpB family.

Its subcellular location is the cytoplasm. Required for rescue of stalled ribosomes mediated by trans-translation. Binds to transfer-messenger RNA (tmRNA), required for stable association of tmRNA with ribosomes. tmRNA and SmpB together mimic tRNA shape, replacing the anticodon stem-loop with SmpB. tmRNA is encoded by the ssrA gene; the 2 termini fold to resemble tRNA(Ala) and it encodes a 'tag peptide', a short internal open reading frame. During trans-translation Ala-aminoacylated tmRNA acts like a tRNA, entering the A-site of stalled ribosomes, displacing the stalled mRNA. The ribosome then switches to translate the ORF on the tmRNA; the nascent peptide is terminated with the 'tag peptide' encoded by the tmRNA and targeted for degradation. The ribosome is freed to recommence translation, which seems to be the essential function of trans-translation. This chain is SsrA-binding protein, found in Shewanella sediminis (strain HAW-EB3).